Reading from the N-terminus, the 515-residue chain is 1-pyrroline-5-carboxylate dehydrogenase (515 aa).

Catalysis depends on residues Glu-286 and Cys-320.

This sequence belongs to the aldehyde dehydrogenase family. RocA subfamily.

The catalysed reaction is L-glutamate 5-semialdehyde + NAD(+) + H2O = L-glutamate + NADH + 2 H(+). It participates in amino-acid degradation; L-proline degradation into L-glutamate; L-glutamate from L-proline: step 2/2. This Bacillus pumilus (strain SAFR-032) protein is 1-pyrroline-5-carboxylate dehydrogenase.